A 438-amino-acid polypeptide reads, in one-letter code: Flotillin-2 (438 aa).

It belongs to the band 7/mec-2 family. Flotillin subfamily. Heterooligomeric complex of flotillins 1 and 2.

Its subcellular location is the membrane. Its function is as follows. May play a role in axon growth and regeneration. May be involved in epidermal cell adhesion and epidermal structure and function. The sequence is that of Flotillin-2 from Drosophila melanogaster (Fruit fly).